A 393-amino-acid polypeptide reads, in one-letter code: Dual specificity mitogen-activated protein kinase kinase 1 (393 aa).

The interval 1–27 (MPKKKPTPIQLNPAPDGSAVNGTSSAE) is disordered. The Protein kinase domain maps to 68–361 (FEKISELGAG…LKQLMVHAFI (294 aa)). Residues 74 to 82 (LGAGNGGVV) and lysine 97 each bind ATP. The active-site Proton acceptor is the aspartate 190. Serine 218 and serine 222 each carry phosphoserine; by RAF. Residues 270-307 (ELELLFGCHVEGDAAETPPRPRTPGRPLSSYGMDSRPP) form an RAF1-binding region. Threonine 286 is modified (phosphothreonine). Position 292 is a phosphothreonine; by MAPK1 (threonine 292). The residue at position 298 (serine 298) is a Phosphoserine; by PAK.

This sequence belongs to the protein kinase superfamily. STE Ser/Thr protein kinase family. MAP kinase kinase subfamily. Found in a complex with at least BRAF, HRAS, MAP2K1, MAPK3/ERK1 and RGS14. Forms a heterodimer with MAP2K2/MEK2. Forms heterodimers with KSR2 which further dimerize to form tetramers. Interacts with KSR1 or KSR2 and BRAF; the interaction with KSR1 or KSR2 mediates KSR1-BRAF or KSR2-BRAF dimerization. Interacts with ARBB2, LAMTOR3, MAPK1/ERK2 and RAF1. Interacts with MAPK1/ERK2. Interacts with MORG1. Interacts with PPARG. Interacts with SGK1. Interacts with BIRC6/bruce. Interacts with KAT7; the interaction promotes KAT7 phosphorylation. Interacts with RAF1 and NEK10; the interaction is required for ERK1/2-signaling pathway activation in response to UV irradiation. Interacts with TRAF3IP3. Interacts with MOS. In terms of processing, phosphorylation at Ser-218 and Ser-222 by MAP kinase kinase kinases (BRAF or MEKK1) positively regulates kinase activity. Also phosphorylated at Thr-292 by MAPK1/ERK2 and at Ser-298 by PAK. MAPK1/ERK2 phosphorylation of Thr-292 occurs in response to cellular adhesion and leads to inhibition of Ser-298 phosphorylation by PAK. Autophosphorylated at Ser-218 and Ser-222, autophosphosphorylation is promoted by NEK10 following UV irradiation.

The protein localises to the cytoplasm. It localises to the cytoskeleton. Its subcellular location is the microtubule organizing center. It is found in the centrosome. The protein resides in the spindle pole body. The protein localises to the nucleus. It localises to the membrane. The catalysed reaction is L-seryl-[protein] + ATP = O-phospho-L-seryl-[protein] + ADP + H(+). It carries out the reaction L-threonyl-[protein] + ATP = O-phospho-L-threonyl-[protein] + ADP + H(+). The enzyme catalyses L-tyrosyl-[protein] + ATP = O-phospho-L-tyrosyl-[protein] + ADP + H(+). Its activity is regulated as follows. Ras proteins such as HRAS mediate the activation of RAF proteins such as RAF1 or BRAF which in turn activate extracellular signal-regulated kinases (ERK) through MAPK (mitogen-activated protein kinases) and ERK kinases MAP2K1/MEK1 and MAP2K2/MEK2. Activation occurs through phosphorylation of Ser-218 and Ser-222. MAP2K1/MEK1 binds KSR1 or KSR2 releasing the inhibitory intramolecular interaction between KSR1 or KSR2 protein kinase and N-terminal domains. This allows KSR1 or KSR2 dimerization with BRAF leading to BRAF activation and phosphorylation of MAP2K1. MAP2K1/MEK1 is also the target of negative feed-back regulation by its substrate kinases, such as MAPK1/ERK2. These phosphorylate MAP2K1/MEK1 on Thr-292, thereby facilitating dephosphorylation of the activating residues Ser-218 and Ser-222. Inhibited by serine/threonine phosphatase 2A. Dual specificity protein kinase which acts as an essential component of the MAP kinase signal transduction pathway. Binding of extracellular ligands such as growth factors, cytokines and hormones to their cell-surface receptors activates RAS and this initiates RAF1 activation. RAF1 then further activates the dual-specificity protein kinases MAP2K1/MEK1 and MAP2K2/MEK2. Both MAP2K1/MEK1 and MAP2K2/MEK2 function specifically in the MAPK/ERK cascade, and catalyze the concomitant phosphorylation of a threonine and a tyrosine residue in a Thr-Glu-Tyr sequence located in the extracellular signal-regulated kinases MAPK3/ERK1 and MAPK1/ERK2, leading to their activation and further transduction of the signal within the MAPK/ERK cascade. Activates BRAF in a KSR1 or KSR2-dependent manner; by binding to KSR1 or KSR2 releases the inhibitory intramolecular interaction between KSR1 or KSR2 protein kinase and N-terminal domains which promotes KSR1 or KSR2-BRAF dimerization and BRAF activation. Depending on the cellular context, this pathway mediates diverse biological functions such as cell growth, adhesion, survival and differentiation, predominantly through the regulation of transcription, metabolism and cytoskeletal rearrangements. One target of the MAPK/ERK cascade is peroxisome proliferator-activated receptor gamma (PPARG), a nuclear receptor that promotes differentiation and apoptosis. MAP2K1/MEK1 has been shown to export PPARG from the nucleus. The MAPK/ERK cascade is also involved in the regulation of endosomal dynamics, including lysosome processing and endosome cycling through the perinuclear recycling compartment (PNRC), as well as in the fragmentation of the Golgi apparatus during mitosis. The polypeptide is Dual specificity mitogen-activated protein kinase kinase 1 (Map2k1) (Mus musculus (Mouse)).